We begin with the raw amino-acid sequence, 37 residues long: Large ribosomal subunit protein bL36c (37 aa).

Belongs to the bacterial ribosomal protein bL36 family.

The protein resides in the plastid. It localises to the chloroplast. The chain is Large ribosomal subunit protein bL36c from Tupiella akineta (Green alga).